The sequence spans 554 residues: MFS-type transporter tstD (554 aa).

Polar residues-rich tracts occupy residues 1–10 (MPEPFNSTMP) and 27–38 (QDSNQPPEMSAS). The segment at 1–68 (MPEPFNSTMP…ESENNEPYSV (68 aa)) is disordered. Asn6 carries N-linked (GlcNAc...) asparagine glycosylation. Basic and acidic residues predominate over residues 39 to 48 (SEKKHPENEN). The chain crosses the membrane as a helical span at residues 76 to 96 (LMVLAASLAGFFSPLSASIYY). N-linked (GlcNAc...) asparagine glycosylation is found at Asn107 and Asn114. Transmembrane regions (helical) follow at residues 115-135 (LTVT…ASFS), 142-162 (PGYA…ALQN), 173-193 (LQSA…SDII), 202-222 (IAFA…IGGL), and 231-251 (WIFW…FLFF). The interval 281–300 (KEKQRQQRAENEEENANRQR) is disordered. The next 3 membrane-spanning stretches (helical) occupy residues 311 to 331 (VFVV…GVAF), 354 to 374 (IKVA…ALST), and 413 to 433 (IALP…WLMT). Asn437 carries an N-linked (GlcNAc...) asparagine glycan. 3 consecutive transmembrane segments (helical) span residues 442–462 (IILL…LNVL), 473–493 (MVTA…AAMI), and 504–524 (WSYT…LLTM).

The protein belongs to the major facilitator superfamily.

It localises to the membrane. In terms of biological role, MFS-type transporter; part of the gene cluster that mediates the biosynthesis of the antihypercholesterolemic agents phomoidrides which are dimeric anhydrides. In Talaromyces stipitatus (strain ATCC 10500 / CBS 375.48 / QM 6759 / NRRL 1006) (Penicillium stipitatum), this protein is MFS-type transporter tstD.